We begin with the raw amino-acid sequence, 575 residues long: Dihydroxy-acid dehydratase (575 aa).

Residues 1-27 form a disordered region; the sequence is MSNQERQERPEKDPDLRSTEVTEGYEK. Cys-61 is a [2Fe-2S] cluster binding site. Residue Asp-93 coordinates Mg(2+). Residue Cys-134 participates in [2Fe-2S] cluster binding. 2 residues coordinate Mg(2+): Asp-135 and Lys-136. Position 136 is an N6-carboxylysine (Lys-136). Position 206 (Cys-206) interacts with [2Fe-2S] cluster. Glu-460 contacts Mg(2+). Ser-486 acts as the Proton acceptor in catalysis.

It belongs to the IlvD/Edd family. In terms of assembly, homodimer. Requires [2Fe-2S] cluster as cofactor. Mg(2+) is required as a cofactor.

The catalysed reaction is (2R)-2,3-dihydroxy-3-methylbutanoate = 3-methyl-2-oxobutanoate + H2O. It catalyses the reaction (2R,3R)-2,3-dihydroxy-3-methylpentanoate = (S)-3-methyl-2-oxopentanoate + H2O. It participates in amino-acid biosynthesis; L-isoleucine biosynthesis; L-isoleucine from 2-oxobutanoate: step 3/4. It functions in the pathway amino-acid biosynthesis; L-valine biosynthesis; L-valine from pyruvate: step 3/4. In terms of biological role, functions in the biosynthesis of branched-chain amino acids. Catalyzes the dehydration of (2R,3R)-2,3-dihydroxy-3-methylpentanoate (2,3-dihydroxy-3-methylvalerate) into 2-oxo-3-methylpentanoate (2-oxo-3-methylvalerate) and of (2R)-2,3-dihydroxy-3-methylbutanoate (2,3-dihydroxyisovalerate) into 2-oxo-3-methylbutanoate (2-oxoisovalerate), the penultimate precursor to L-isoleucine and L-valine, respectively. The protein is Dihydroxy-acid dehydratase of Haloarcula marismortui (strain ATCC 43049 / DSM 3752 / JCM 8966 / VKM B-1809) (Halobacterium marismortui).